Here is a 259-residue protein sequence, read N- to C-terminus: Probable ATP-dependent transporter ycf16 (259 aa).

The 245-residue stretch at 9–253 (LEVKNLKAQV…EIKGYDWLNE (245 aa)) folds into the ABC transporter domain. 41-48 (GPNGSGKS) contributes to the ATP binding site.

The protein belongs to the ABC transporter superfamily. Ycf16 family.

Its subcellular location is the plastid. The protein localises to the cyanelle. The sequence is that of Probable ATP-dependent transporter ycf16 (ycf16) from Cyanophora paradoxa.